Reading from the N-terminus, the 77-residue chain is Translation initiation factor IF-1, chloroplastic (77 aa).

Residues 1–71 (MKEQKWIHEG…TRGRIIYRLR (71 aa)) enclose the S1-like domain.

It belongs to the IF-1 family. As to quaternary structure, component of the 30S ribosomal translation pre-initiation complex which assembles on the 30S ribosome in the order IF-2 and IF-3, IF-1 and N-formylmethionyl-tRNA(fMet); mRNA recruitment can occur at any time during PIC assembly.

Its subcellular location is the plastid. The protein resides in the chloroplast. Its function is as follows. One of the essential components for the initiation of protein synthesis. Stabilizes the binding of IF-2 and IF-3 on the 30S subunit to which N-formylmethionyl-tRNA(fMet) subsequently binds. Helps modulate mRNA selection, yielding the 30S pre-initiation complex (PIC). Upon addition of the 50S ribosomal subunit IF-1, IF-2 and IF-3 are released leaving the mature 70S translation initiation complex. The polypeptide is Translation initiation factor IF-1, chloroplastic (Garrya elliptica (Wavyleaf silktassel)).